The sequence spans 378 residues: Putative glutamate--cysteine ligase 2 (378 aa).

The protein belongs to the glutamate--cysteine ligase type 2 family. YbdK subfamily.

It catalyses the reaction L-cysteine + L-glutamate + ATP = gamma-L-glutamyl-L-cysteine + ADP + phosphate + H(+). In terms of biological role, ATP-dependent carboxylate-amine ligase which exhibits weak glutamate--cysteine ligase activity. This Ectopseudomonas mendocina (strain ymp) (Pseudomonas mendocina) protein is Putative glutamate--cysteine ligase 2.